The chain runs to 239 residues: THAP domain-containing protein 3 (239 aa).

Residues 1-82 (MPKSCAARQC…LKHNAVPTVF (82 aa)) form a THAP-type zinc finger. Disordered stretches follow at residues 88–125 (PQLVRENTDPTGRSGDATSGERKVLPETGSGECGLGRK) and 139–174 (VGGLGAQVPPHTPETSGVPGQPASPPELKRRLPTQP). Positions 176 to 179 (DHSY) match the HCFC1-binding motif (HBM) motif.

In terms of assembly, component of a THAP1/THAP3-HCFC1-OGT complex that contains at least, either THAP1 or THAP3, HCFC1 and OGT. Interacts directly with OGT and HCFC1 (via its HBM).

Functionally, component of a THAP1/THAP3-HCFC1-OGT complex that is required for the regulation of the transcriptional activity of RRM1. In Bos taurus (Bovine), this protein is THAP domain-containing protein 3 (THAP3).